A 423-amino-acid polypeptide reads, in one-letter code: UDP-N-acetylglucosamine 1-carboxyvinyltransferase 1 (423 aa).

Residue Lys23–Asn24 coordinates phosphoenolpyruvate. A UDP-N-acetyl-alpha-D-glucosamine-binding site is contributed by Arg96. The active-site Proton donor is Cys120. Position 120 is a 2-(S-cysteinyl)pyruvic acid O-phosphothioketal (Cys120). Residues Arg125–Leu129, Asp309, and Val331 each bind UDP-N-acetyl-alpha-D-glucosamine.

It belongs to the EPSP synthase family. MurA subfamily.

It is found in the cytoplasm. The catalysed reaction is phosphoenolpyruvate + UDP-N-acetyl-alpha-D-glucosamine = UDP-N-acetyl-3-O-(1-carboxyvinyl)-alpha-D-glucosamine + phosphate. It functions in the pathway cell wall biogenesis; peptidoglycan biosynthesis. Functionally, cell wall formation. Adds enolpyruvyl to UDP-N-acetylglucosamine. The sequence is that of UDP-N-acetylglucosamine 1-carboxyvinyltransferase 1 from Streptococcus mutans serotype c (strain ATCC 700610 / UA159).